Here is a 218-residue protein sequence, read N- to C-terminus: MAEAILAVRGGLGAKSRLAAVFSDAERAALVEAMLLDMLDALAGAGAGAVRRVWVVTPTERLERLAAAAGARVIREPRPAGLNAAFRCGLAAAAEEAPYADIVLLPGDLPTLRAQDVDAALLLLRTHDLVLALASRDGGTGLLAVRAGVPFTPQFGAQSCARHRRQARARGLSCALVEAGSLALDLDRPEDAVEVARGPCGRRTAEVLSDLKSRWRAQ.

This sequence belongs to the CofC family.

It catalyses the reaction (2R)-3-phosphoglycerate + GTP + H(+) = 3-[(R)-glyceryl]-diphospho-5'-guanosine + diphosphate. It functions in the pathway cofactor biosynthesis; coenzyme F420 biosynthesis. Functionally, guanylyltransferase that catalyzes the activation of (2R)-3-phosphoglycerate (3PG) as 3-[(R)-glyceryl]-diphospho-5'-guanosine, via the condensation of 3PG with GTP. It is involved in the biosynthesis of a derivative of the hydride carrier cofactor coenzyme F420, 3PG-F420. The protein is 3-phospho-D-glycerate guanylyltransferase of Phenylobacterium zucineum (strain HLK1).